The following is a 410-amino-acid chain: Sorting nexin-4 (410 aa).

A PX domain is found at 11-135 (FIIVSDPQKQ…TFLVSSDWDA (125 aa)). A 1,2-diacyl-sn-glycero-3-phospho-(1D-myo-inositol-3-phosphate) is bound by residues arginine 58, serine 60, lysine 84, and arginine 101. Positions 329–368 (NQEAARREKISKLESKVQALTTEVENAKKVADAFEKEALK) form a coiled coil.

Belongs to the sorting nexin family.

The protein resides in the cytoplasm. Its subcellular location is the cytosol. It is found in the preautophagosomal structure membrane. It localises to the endosome membrane. In terms of biological role, sorting nexin, involved in the separation or division of vacuoles throughout the entire life cycle of the cells. Involved in retrieval of late-Golgi SNAREs from post-Golgi endosomes to the trans-Golgi network, for cytoplasm to vacuole transport (Cvt), and autophagy of large cargos including mitophagy, pexophagy and glycophagy. In Eremothecium gossypii (strain ATCC 10895 / CBS 109.51 / FGSC 9923 / NRRL Y-1056) (Yeast), this protein is Sorting nexin-4 (SNX4).